The primary structure comprises 253 residues: Ubiquinone/menaquinone biosynthesis C-methyltransferase UbiE (253 aa).

Residues threonine 76, aspartate 97, asparagine 125–alanine 126, and serine 142 contribute to the S-adenosyl-L-methionine site.

Belongs to the class I-like SAM-binding methyltransferase superfamily. MenG/UbiE family.

It carries out the reaction a 2-demethylmenaquinol + S-adenosyl-L-methionine = a menaquinol + S-adenosyl-L-homocysteine + H(+). It catalyses the reaction a 2-methoxy-6-(all-trans-polyprenyl)benzene-1,4-diol + S-adenosyl-L-methionine = a 5-methoxy-2-methyl-3-(all-trans-polyprenyl)benzene-1,4-diol + S-adenosyl-L-homocysteine + H(+). Its pathway is quinol/quinone metabolism; menaquinone biosynthesis; menaquinol from 1,4-dihydroxy-2-naphthoate: step 2/2. It participates in cofactor biosynthesis; ubiquinone biosynthesis. Methyltransferase required for the conversion of demethylmenaquinol (DMKH2) to menaquinol (MKH2) and the conversion of 2-polyprenyl-6-methoxy-1,4-benzoquinol (DDMQH2) to 2-polyprenyl-3-methyl-6-methoxy-1,4-benzoquinol (DMQH2). In Xylella fastidiosa (strain M23), this protein is Ubiquinone/menaquinone biosynthesis C-methyltransferase UbiE.